The chain runs to 469 residues: 3-isopropylmalate dehydratase large subunit (469 aa).

Positions 347, 410, and 413 each coordinate [4Fe-4S] cluster.

This sequence belongs to the aconitase/IPM isomerase family. LeuC type 1 subfamily. Heterodimer of LeuC and LeuD. It depends on [4Fe-4S] cluster as a cofactor.

The enzyme catalyses (2R,3S)-3-isopropylmalate = (2S)-2-isopropylmalate. Its pathway is amino-acid biosynthesis; L-leucine biosynthesis; L-leucine from 3-methyl-2-oxobutanoate: step 2/4. Its function is as follows. Catalyzes the isomerization between 2-isopropylmalate and 3-isopropylmalate, via the formation of 2-isopropylmaleate. The protein is 3-isopropylmalate dehydratase large subunit of Burkholderia vietnamiensis (strain G4 / LMG 22486) (Burkholderia cepacia (strain R1808)).